Here is a 381-residue protein sequence, read N- to C-terminus: Dual-specificity RNA methyltransferase RlmN (381 aa).

Catalysis depends on Glu-96, which acts as the Proton acceptor. The Radical SAM core domain occupies 102-342 (TDDRGTLCVS…TRTTRGDDID (241 aa)). An intrachain disulfide couples Cys-109 to Cys-345. [4Fe-4S] cluster contacts are provided by Cys-116, Cys-120, and Cys-123. S-adenosyl-L-methionine contacts are provided by residues 170–171 (GE), Ser-202, 224–226 (SLH), and Asn-302. Cys-345 serves as the catalytic S-methylcysteine intermediate.

The protein belongs to the radical SAM superfamily. RlmN family. [4Fe-4S] cluster serves as cofactor.

The protein resides in the cytoplasm. The catalysed reaction is adenosine(2503) in 23S rRNA + 2 reduced [2Fe-2S]-[ferredoxin] + 2 S-adenosyl-L-methionine = 2-methyladenosine(2503) in 23S rRNA + 5'-deoxyadenosine + L-methionine + 2 oxidized [2Fe-2S]-[ferredoxin] + S-adenosyl-L-homocysteine. The enzyme catalyses adenosine(37) in tRNA + 2 reduced [2Fe-2S]-[ferredoxin] + 2 S-adenosyl-L-methionine = 2-methyladenosine(37) in tRNA + 5'-deoxyadenosine + L-methionine + 2 oxidized [2Fe-2S]-[ferredoxin] + S-adenosyl-L-homocysteine. Its function is as follows. Specifically methylates position 2 of adenine 2503 in 23S rRNA and position 2 of adenine 37 in tRNAs. m2A2503 modification seems to play a crucial role in the proofreading step occurring at the peptidyl transferase center and thus would serve to optimize ribosomal fidelity. This Pseudomonas putida (strain ATCC 700007 / DSM 6899 / JCM 31910 / BCRC 17059 / LMG 24140 / F1) protein is Dual-specificity RNA methyltransferase RlmN.